A 420-amino-acid chain; its full sequence is Adenylosuccinate synthetase (420 aa).

Residues glycine 12–lysine 18 and glycine 40–threonine 42 contribute to the GTP site. Residue aspartate 13 is the Proton acceptor of the active site. Positions 13 and 40 each coordinate Mg(2+). IMP is bound by residues aspartate 13–lysine 16, asparagine 38–histidine 41, threonine 128, arginine 142, glutamine 221, threonine 236, and arginine 299. Catalysis depends on histidine 41, which acts as the Proton donor. Residue alanine 295 to arginine 301 participates in substrate binding. GTP is bound by residues arginine 301, lysine 327–aspartate 329, and serine 399–glycine 401.

This sequence belongs to the adenylosuccinate synthetase family. Homodimer. Requires Mg(2+) as cofactor.

The protein localises to the cytoplasm. The enzyme catalyses IMP + L-aspartate + GTP = N(6)-(1,2-dicarboxyethyl)-AMP + GDP + phosphate + 2 H(+). The protein operates within purine metabolism; AMP biosynthesis via de novo pathway; AMP from IMP: step 1/2. Functionally, plays an important role in the de novo pathway of purine nucleotide biosynthesis. Catalyzes the first committed step in the biosynthesis of AMP from IMP. This chain is Adenylosuccinate synthetase, found in Petrotoga mobilis (strain DSM 10674 / SJ95).